The following is a 137-amino-acid chain: Small ribosomal subunit protein bS18c (137 aa).

This sequence belongs to the bacterial ribosomal protein bS18 family. In terms of assembly, part of the 30S ribosomal subunit.

Its subcellular location is the plastid. It localises to the chloroplast. The protein is Small ribosomal subunit protein bS18c (rps18) of Chlamydomonas reinhardtii (Chlamydomonas smithii).